A 404-amino-acid polypeptide reads, in one-letter code: Endophilin-B2 (404 aa).

The residue at position 1 (Met-1) is an N-acetylmethionine. The membrane-binding amphipathic helix stretch occupies residues 1–27 (MDFNMKKLASDAGIFFTRAVQFTEEKF). Ser-10 carries the phosphoserine modification. In terms of domain architecture, BAR spans 24–291 (EEKFGQAEKT…LGSSQGAIFP (268 aa)). Residues 209–239 (SASALWNDEVDKAEQELRAAQTEFDRQAEVT) are a coiled coil. Residues 344–404 (SGTRKARVLY…VPVTYLELLS (61 aa)) form the SH3 domain. At Ser-404 the chain carries Phosphoserine.

This sequence belongs to the endophilin family. In terms of assembly, homodimer, and heterodimer with SH3GLB1.

The protein localises to the cytoplasm. The chain is Endophilin-B2 from Rattus norvegicus (Rat).